The chain runs to 447 residues: MLHRYLPMTEEDKKEMLQTIGVQTIDELFSDIPESVRFKGDLKIKEAKSEPELLKELSQMASKNANLKEYASFLGAGVYDHYAPVIVDHVISRSEFYTAYTPYQPEISQGELQAIFEFQTMICELTGMDVANSSMYDGGTALAEAAMLAAGHTRKKKILVSAAVHPESRAVLETYAKGQNLEVVEIDHKNGVTDLEVLQSEVDDTVACVIVQYPNFFGQVEKLADIEKIVHQQKSLFIVSSNPLSLGALTPPGKFGADVVIGDAQPFGIPTQFGGPHCGYFATTKAFMRKIPGRLVGQTVDSDGKRGFVLTLQAREQHIRRDKATSNICSNQALNALAASVAMTALGKQGVKEMARQNISKAQYAKRQFEAKGFTVTFAGPFFNEFVVDCKRPVKEINDVLIQKNIIGGYDLGRDYKEHENHMLVAVTELRTKEEIDTLVNEMGAIQ.

It belongs to the GcvP family. N-terminal subunit subfamily. The glycine cleavage system is composed of four proteins: P, T, L and H. In this organism, the P 'protein' is a heterodimer of two subunits.

It catalyses the reaction N(6)-[(R)-lipoyl]-L-lysyl-[glycine-cleavage complex H protein] + glycine + H(+) = N(6)-[(R)-S(8)-aminomethyldihydrolipoyl]-L-lysyl-[glycine-cleavage complex H protein] + CO2. The glycine cleavage system catalyzes the degradation of glycine. The P protein binds the alpha-amino group of glycine through its pyridoxal phosphate cofactor; CO(2) is released and the remaining methylamine moiety is then transferred to the lipoamide cofactor of the H protein. In Bacillus mycoides (strain KBAB4) (Bacillus weihenstephanensis), this protein is Probable glycine dehydrogenase (decarboxylating) subunit 1.